Here is a 229-residue protein sequence, read N- to C-terminus: NAD(P)H-quinone oxidoreductase subunit K, chloroplastic (229 aa).

[4Fe-4S] cluster-binding residues include Cys43, Cys44, Cys108, and Cys139.

This sequence belongs to the complex I 20 kDa subunit family. In terms of assembly, NDH is composed of at least 16 different subunits, 5 of which are encoded in the nucleus. It depends on [4Fe-4S] cluster as a cofactor.

The protein resides in the plastid. It localises to the chloroplast thylakoid membrane. It carries out the reaction a plastoquinone + NADH + (n+1) H(+)(in) = a plastoquinol + NAD(+) + n H(+)(out). It catalyses the reaction a plastoquinone + NADPH + (n+1) H(+)(in) = a plastoquinol + NADP(+) + n H(+)(out). In terms of biological role, NDH shuttles electrons from NAD(P)H:plastoquinone, via FMN and iron-sulfur (Fe-S) centers, to quinones in the photosynthetic chain and possibly in a chloroplast respiratory chain. The immediate electron acceptor for the enzyme in this species is believed to be plastoquinone. Couples the redox reaction to proton translocation, and thus conserves the redox energy in a proton gradient. The protein is NAD(P)H-quinone oxidoreductase subunit K, chloroplastic of Aethionema grandiflorum (Persian stone-cress).